A 314-amino-acid polypeptide reads, in one-letter code: MTTFEIECIESTREGLRDHYSKFCLEPLNQGQGTTLGNALRRTLLADLEGTAIVAVRIAGVSHEFSTIPGIREDVLEILLNLKEVVLKSQIGTSGVGRLRVQGPAIVTTNHLELPSEIELIDPNQYIATICGNNILEMEFRIETGKGYNLVERDSDESSIDFLQVDAIFMPVKKVNYLSKDIRSENNLIQEQLTLEVWTNGSIDPQDAVSQAGKILTELLFPLKEINFKPDDSESIIEDSKINQILIEELQLSVRAYNCLKRAQIHSVADLLDYSQEDLIEIKNFGQKSAEEVIDALQKRLGINLPKEKTSKSN.

Residues 1–227 form an alpha N-terminal domain (alpha-NTD) region; that stretch reads MTTFEIECIE…ELLFPLKEIN (227 aa). The interval 237–314 is alpha C-terminal domain (alpha-CTD); that stretch reads IEDSKINQIL…LPKEKTSKSN (78 aa).

The protein belongs to the RNA polymerase alpha chain family. In terms of assembly, in plastids the minimal PEP RNA polymerase catalytic core is composed of four subunits: alpha, beta, beta', and beta''. When a (nuclear-encoded) sigma factor is associated with the core the holoenzyme is formed, which can initiate transcription.

Its subcellular location is the plastid. It is found in the chloroplast. It carries out the reaction RNA(n) + a ribonucleoside 5'-triphosphate = RNA(n+1) + diphosphate. In terms of biological role, DNA-dependent RNA polymerase catalyzes the transcription of DNA into RNA using the four ribonucleoside triphosphates as substrates. This Pyrenomonas salina protein is DNA-directed RNA polymerase subunit alpha.